Reading from the N-terminus, the 240-residue chain is Probable septum site-determining protein MinC (240 aa).

Belongs to the MinC family. Interacts with MinD and FtsZ.

Its function is as follows. Cell division inhibitor that blocks the formation of polar Z ring septums. Rapidly oscillates between the poles of the cell to destabilize FtsZ filaments that have formed before they mature into polar Z rings. Prevents FtsZ polymerization. In Buchnera aphidicola subsp. Cinara cedri (strain Cc), this protein is Probable septum site-determining protein MinC.